The following is a 151-amino-acid chain: Putative pre-16S rRNA nuclease (151 aa).

The protein belongs to the YqgF nuclease family.

The protein localises to the cytoplasm. In terms of biological role, could be a nuclease involved in processing of the 5'-end of pre-16S rRNA. This chain is Putative pre-16S rRNA nuclease, found in Bifidobacterium longum subsp. infantis (strain ATCC 15697 / DSM 20088 / JCM 1222 / NCTC 11817 / S12).